A 465-amino-acid polypeptide reads, in one-letter code: Adenosylhomocysteinase (465 aa).

Substrate is bound by residues Thr-56, Asp-131, and Glu-191. Residue 192 to 194 coordinates NAD(+); it reads TTT. Substrate is bound by residues Lys-221 and Asp-225. Residues Asn-226, 255–260, Glu-278, Asn-313, 334–336, and Asn-379 each bind NAD(+); these read GYGDVG and IGH.

This sequence belongs to the adenosylhomocysteinase family. It depends on NAD(+) as a cofactor.

The protein localises to the cytoplasm. It carries out the reaction S-adenosyl-L-homocysteine + H2O = L-homocysteine + adenosine. It participates in amino-acid biosynthesis; L-homocysteine biosynthesis; L-homocysteine from S-adenosyl-L-homocysteine: step 1/1. In terms of biological role, may play a key role in the regulation of the intracellular concentration of adenosylhomocysteine. In Bartonella tribocorum (strain CIP 105476 / IBS 506), this protein is Adenosylhomocysteinase.